The following is a 430-amino-acid chain: tRNA-2-methylthio-N(6)-dimethylallyladenosine synthase (430 aa).

The 110-residue stretch at 2-111 folds into the MTTase N-terminal domain; the sequence is KKIHIKTYGC…IPQAVERAIN (110 aa). Cysteine 11, cysteine 47, cysteine 76, cysteine 147, cysteine 151, and cysteine 154 together coordinate [4Fe-4S] cluster. The Radical SAM core domain occupies 133-364; that stretch reads RNSKHHAWIT…LNLQKEINKQ (232 aa). The TRAM domain maps to 367–428; sequence ENYLNKTVEI…AGPLYGDIIK (62 aa).

It belongs to the methylthiotransferase family. MiaB subfamily. Monomer. It depends on [4Fe-4S] cluster as a cofactor.

The protein localises to the cytoplasm. It catalyses the reaction N(6)-dimethylallyladenosine(37) in tRNA + (sulfur carrier)-SH + AH2 + 2 S-adenosyl-L-methionine = 2-methylsulfanyl-N(6)-dimethylallyladenosine(37) in tRNA + (sulfur carrier)-H + 5'-deoxyadenosine + L-methionine + A + S-adenosyl-L-homocysteine + 2 H(+). Catalyzes the methylthiolation of N6-(dimethylallyl)adenosine (i(6)A), leading to the formation of 2-methylthio-N6-(dimethylallyl)adenosine (ms(2)i(6)A) at position 37 in tRNAs that read codons beginning with uridine. The protein is tRNA-2-methylthio-N(6)-dimethylallyladenosine synthase of Thermosipho melanesiensis (strain DSM 12029 / CIP 104789 / BI429).